Here is a 327-residue protein sequence, read N- to C-terminus: Vacuolar protein sorting-associated protein 26A (327 aa).

Residues 306–327 form a disordered region; sequence RTNFHQRFESPESQASAEQPEM. Ser315 carries the post-translational modification Phosphoserine. Polar residues predominate over residues 316-327; the sequence is PESQASAEQPEM.

Belongs to the VPS26 family. Component of the heterotrimeric retromer cargo-selective complex (CSC), also described as vacuolar protein sorting subcomplex (VPS), formed by VPS26 (VPS26A or VPS26B), VPS29 and VPS35. The CSC has a highly elongated structure with VPS26 and VPS29 binding independently at opposite distal ends of VPS35 as central platform. The CSC is believed to associate with variable sorting nexins to form functionally distinct retromer complex variants. The originally described retromer complex (also called SNX-BAR retromer) is a pentamer containing the CSC and a heterodimeric membrane-deforming subcomplex formed between SNX1 or SNX2 and SNX5 or SNX6 (also called SNX-BAR subcomplex); the respective CSC and SNX-BAR subcomplexes associate with low affinity. The CSC associates with SNX3 to form a SNX3-retromer complex. The CSC associates with SNX27, the WASH complex and the SNX-BAR subcomplex to form the SNX27-retromer complex. Interacts with VPS29, VPS35, SNX27, SNX1, SNX2, SNX5, SNX6, SNX3, RAB7A, ECPAS, EHD1, WASHC5, SORL1.

It localises to the cytoplasm. The protein localises to the endosome membrane. The protein resides in the early endosome. In terms of biological role, acts as a component of the retromer cargo-selective complex (CSC). The CSC is believed to be the core functional component of retromer or respective retromer complex variants acting to prevent missorting of selected transmembrane cargo proteins into the lysosomal degradation pathway. The recruitment of the CSC to the endosomal membrane involves RAB7A and SNX3. The SNX-BAR retromer mediates retrograde transport of cargo proteins from endosomes to the trans-Golgi network (TGN) and is involved in endosome-to-plasma membrane transport for cargo protein recycling. The SNX3-retromer mediates the retrograde endosome-to-TGN transport of WLS distinct from the SNX-BAR retromer pathway. The SNX27-retromer is believed to be involved in endosome-to-plasma membrane trafficking and recycling of a broad spectrum of cargo proteins. The CSC complex seems to act as recruitment hub for other proteins, such as the WASH complex and TBC1D5. Required for retrograde transport of lysosomal enzyme receptor IGF2R. Required to regulate transcytosis of the polymeric immunoglobulin receptor (pIgR-pIgA). Required for the endosomal localization of WASHC2 (indicative for the WASH complex). Required for the endosomal localization of TBC1D5. Mediates retromer cargo recognition of SORL1 and is involved in trafficking of SORL1 implicated in sorting and processing of APP. Involved in retromer-independent lysosomal sorting of F2R. Involved in recycling of ADRB2. Acts redundantly with VSP26B in SNX-27 mediated endocytic recycling of SLC2A1/GLUT1. Enhances the affinity of SNX27 for PDZ-binding motifs in cargo proteins. The protein is Vacuolar protein sorting-associated protein 26A (VPS26A) of Bos taurus (Bovine).